The following is a 345-amino-acid chain: Ferrochelatase (345 aa).

Fe cation is bound by residues histidine 199 and glutamate 302.

This sequence belongs to the ferrochelatase family.

Its subcellular location is the cytoplasm. It carries out the reaction heme b + 2 H(+) = protoporphyrin IX + Fe(2+). It functions in the pathway porphyrin-containing compound metabolism; protoheme biosynthesis; protoheme from protoporphyrin-IX: step 1/1. In terms of biological role, catalyzes the ferrous insertion into protoporphyrin IX. This Porphyromonas gingivalis (strain ATCC 33277 / DSM 20709 / CIP 103683 / JCM 12257 / NCTC 11834 / 2561) protein is Ferrochelatase.